An 81-amino-acid chain; its full sequence is Saposin-C (81 aa).

One can recognise a Saposin B-type domain in the interval 1 to 81 (ESVTCKACEY…CSELGLCMSG (81 aa)). Intrachain disulfides connect Cys5–Cys78, Cys8–Cys72, and Cys36–Cys47. Asn22 carries N-linked (GlcNAc...) asparagine glycosylation.

Its function is as follows. Saposin-A and saposin-C stimulate the hydrolysis of glucosylceramide by beta-glucosylceramidase (EC 3.2.1.45) and galactosylceramide by beta-galactosylceramidase (EC 3.2.1.46). Saposin-C apparently acts by combining with the enzyme and acidic lipid to form an activated complex, rather than by solubilizing the substrate. This Cavia porcellus (Guinea pig) protein is Saposin-C (PSAP).